A 388-amino-acid chain; its full sequence is Putative [LysW]-aminoadipate semialdehyde/glutamate semialdehyde transaminase (388 aa).

Pyridoxal 5'-phosphate is bound by residues 100–101 (GT) and Phe127. Arg130 contributes to the substrate binding site. Pyridoxal 5'-phosphate is bound at residue 211-214 (DEIQ). Position 240 is an N6-(pyridoxal phosphate)lysine (Lys240). Ser268 serves as a coordination point for substrate. Thr269 is a binding site for pyridoxal 5'-phosphate.

It belongs to the class-III pyridoxal-phosphate-dependent aminotransferase family. LysJ subfamily. In terms of assembly, homodimer. The cofactor is pyridoxal 5'-phosphate.

The protein resides in the cytoplasm. It carries out the reaction [amino-group carrier protein]-C-terminal-gamma-(L-lysyl)-L-glutamate + 2-oxoglutarate = [amino-group carrier protein]-C-terminal-N-(1-carboxy-5-oxopentan-1-yl)-L-glutamine + L-glutamate. The catalysed reaction is [amino-group carrier protein]-C-terminal-gamma-(L-ornithyl)-L-glutamate + 2-oxoglutarate = [amino-group carrier protein]-C-terminal-gamma-(L-glutamyl-5-semialdehyde)-L-glutamate + L-glutamate. The protein operates within amino-acid biosynthesis; L-lysine biosynthesis via AAA pathway; L-lysine from L-alpha-aminoadipate (Thermus route): step 4/5. Its pathway is amino-acid biosynthesis; L-arginine biosynthesis. Functionally, involved in both the arginine and lysine biosynthetic pathways. This chain is Putative [LysW]-aminoadipate semialdehyde/glutamate semialdehyde transaminase, found in Aeropyrum pernix (strain ATCC 700893 / DSM 11879 / JCM 9820 / NBRC 100138 / K1).